We begin with the raw amino-acid sequence, 483 residues long: Regulatory protein ViaA (483 aa).

The protein belongs to the ViaA family. Homodimer. Interacts with RavA.

It localises to the cytoplasm. In terms of biological role, component of the RavA-ViaA chaperone complex, which may act on the membrane to optimize the function of some of the respiratory chains. ViaA stimulates the ATPase activity of RavA. The chain is Regulatory protein ViaA from Escherichia coli O7:K1 (strain IAI39 / ExPEC).